A 280-amino-acid polypeptide reads, in one-letter code: uncharacterized protein (280 aa).

Tyrosine 54 functions as the Proton donor in the catalytic mechanism. Histidine 116 serves as a coordination point for substrate. Residue 194 to 246 (SPLMQGQLLDHPVLADIAQTYNKSVAQIILRWDLQHGIITIPKSTKEHRIKEN) participates in NADP(+) binding.

This sequence belongs to the aldo/keto reductase family.

This is an uncharacterized protein from Bacillus subtilis (strain 168).